We begin with the raw amino-acid sequence, 273 residues long: Putative cysteine-rich repeat secretory protein 40 (273 aa).

The N-terminal stretch at 1-32 (MYPSCSLLQRLVWFPFLALVATQLLFIRNVSS) is a signal peptide. Gnk2-homologous domains follow at residues 39–141 (YLHH…SISV) and 151–264 (YENN…LYPF).

The protein belongs to the cysteine-rich repeat secretory protein family.

It localises to the secreted. The chain is Putative cysteine-rich repeat secretory protein 40 (CRRSP40) from Arabidopsis thaliana (Mouse-ear cress).